The primary structure comprises 367 residues: tRNA-specific 2-thiouridylase MnmA (367 aa).

Residues 11 to 18 (GLSGGVDS) and methionine 37 contribute to the ATP site. The segment at 109–111 (NPD) is interaction with target base in tRNA. Catalysis depends on cysteine 114, which acts as the Nucleophile. Cysteine 114 and cysteine 211 are disulfide-bonded. Glycine 139 is an ATP binding site. Residues 161 to 163 (KDQ) form an interaction with tRNA region. The Cysteine persulfide intermediate role is filled by cysteine 211.

It belongs to the MnmA/TRMU family.

The protein localises to the cytoplasm. The catalysed reaction is S-sulfanyl-L-cysteinyl-[protein] + uridine(34) in tRNA + AH2 + ATP = 2-thiouridine(34) in tRNA + L-cysteinyl-[protein] + A + AMP + diphosphate + H(+). Catalyzes the 2-thiolation of uridine at the wobble position (U34) of tRNA, leading to the formation of s(2)U34. The protein is tRNA-specific 2-thiouridylase MnmA of Mycoplasma genitalium (strain ATCC 33530 / DSM 19775 / NCTC 10195 / G37) (Mycoplasmoides genitalium).